Here is a 356-residue protein sequence, read N- to C-terminus: Alanine racemase, catabolic (356 aa).

Lys35 (proton acceptor; specific for D-alanine) is an active-site residue. An N6-(pyridoxal phosphate)lysine modification is found at Lys35. Arg130 serves as a coordination point for substrate. Tyr253 acts as the Proton acceptor; specific for L-alanine in catalysis. Met301 is a substrate binding site.

The protein belongs to the alanine racemase family. Requires pyridoxal 5'-phosphate as cofactor.

The enzyme catalyses L-alanine = D-alanine. Functionally, isomerizes L-alanine to D-alanine which is then oxidized to pyruvate by DadA. This is Alanine racemase, catabolic (dadX) from Escherichia coli O157:H7.